Here is a 163-residue protein sequence, read N- to C-terminus: NADH-quinone oxidoreductase subunit I (163 aa).

4Fe-4S ferredoxin-type domains follow at residues 54-84 and 94-123; these read LRRY…IESD and TRYD…ETHI. The [4Fe-4S] cluster site is built by Cys-64, Cys-67, Cys-70, Cys-74, Cys-103, Cys-106, Cys-109, and Cys-113.

Belongs to the complex I 23 kDa subunit family. NDH-1 is composed of 14 different subunits. Subunits NuoA, H, J, K, L, M, N constitute the membrane sector of the complex. [4Fe-4S] cluster serves as cofactor.

It is found in the cell inner membrane. It carries out the reaction a quinone + NADH + 5 H(+)(in) = a quinol + NAD(+) + 4 H(+)(out). In terms of biological role, NDH-1 shuttles electrons from NADH, via FMN and iron-sulfur (Fe-S) centers, to quinones in the respiratory chain. The immediate electron acceptor for the enzyme in this species is believed to be ubiquinone. Couples the redox reaction to proton translocation (for every two electrons transferred, four hydrogen ions are translocated across the cytoplasmic membrane), and thus conserves the redox energy in a proton gradient. The polypeptide is NADH-quinone oxidoreductase subunit I (Ralstonia nicotianae (strain ATCC BAA-1114 / GMI1000) (Ralstonia solanacearum)).